Consider the following 42-residue polypeptide: Large ribosomal subunit protein bL36 (42 aa).

The protein belongs to the bacterial ribosomal protein bL36 family.

The polypeptide is Large ribosomal subunit protein bL36 (Wolbachia pipientis subsp. Culex pipiens (strain wPip)).